A 665-amino-acid polypeptide reads, in one-letter code: Probable potassium transport system protein Kup (665 aa).

12 consecutive transmembrane segments (helical) span residues serine 15 to methionine 35, isoleucine 48 to threonine 68, tryptophan 100 to proline 120, isoleucine 147 to threonine 167, isoleucine 173 to leucine 193, leucine 219 to serine 239, leucine 251 to isoleucine 271, methionine 292 to alanine 312, isoleucine 348 to phenylalanine 368, tyrosine 378 to leucine 398, proline 403 to isoleucine 423, and lysine 431 to isoleucine 451.

The protein belongs to the HAK/KUP transporter (TC 2.A.72) family.

The protein localises to the cell membrane. The catalysed reaction is K(+)(in) + H(+)(in) = K(+)(out) + H(+)(out). In terms of biological role, transport of potassium into the cell. Likely operates as a K(+):H(+) symporter. The sequence is that of Probable potassium transport system protein Kup from Clostridium perfringens (strain ATCC 13124 / DSM 756 / JCM 1290 / NCIMB 6125 / NCTC 8237 / Type A).